The primary structure comprises 307 residues: Elongation factor Ts (307 aa).

An involved in Mg(2+) ion dislocation from EF-Tu region spans residues 80 to 83 (TDFV).

This sequence belongs to the EF-Ts family.

The protein resides in the cytoplasm. Associates with the EF-Tu.GDP complex and induces the exchange of GDP to GTP. It remains bound to the aminoacyl-tRNA.EF-Tu.GTP complex up to the GTP hydrolysis stage on the ribosome. The protein is Elongation factor Ts of Clostridium botulinum (strain Loch Maree / Type A3).